We begin with the raw amino-acid sequence, 217 residues long: Adapter protein MecA (217 aa).

The protein belongs to the MecA family. In terms of assembly, homodimer.

Functionally, enables the recognition and targeting of unfolded and aggregated proteins to the ClpC protease or to other proteins involved in proteolysis. Acts negatively in the development of competence by binding ComK and recruiting it to the ClpCP protease. When overexpressed, inhibits sporulation. Also involved in Spx degradation by ClpC. The chain is Adapter protein MecA from Alkalihalophilus pseudofirmus (strain ATCC BAA-2126 / JCM 17055 / OF4) (Bacillus pseudofirmus).